A 164-amino-acid polypeptide reads, in one-letter code: D-aminoacyl-tRNA deacylase (164 aa).

Residues W72 and F89 each contribute to the tRNA site. The active-site Nucleophile is the T90. The short motif at 104–107 is the C-terminal adenosine nucleotide of tRNA element; it reads HLAK. The short motif at 149–150 is the Gly-cisPro motif, allows the protein to recognize chirality of D-amino acids element; sequence GP.

This sequence belongs to the DTD family. In terms of assembly, homodimer.

It is found in the cytoplasm. The enzyme catalyses glycyl-tRNA(Ala) + H2O = tRNA(Ala) + glycine + H(+). It carries out the reaction a D-aminoacyl-tRNA + H2O = a tRNA + a D-alpha-amino acid + H(+). The catalysed reaction is D-tyrosyl-tRNA(Tyr) + H2O = D-tyrosine + tRNA(Tyr). Functionally, D-aminoacyl-tRNA deacylase, with no observable activity on tRNAs charged with their cognate L-amino acid. Probably acts by rejecting L-amino acids from its binding site rather than specific recognition of D-amino acids. Catalyzes the hydrolysis of D-tyrosyl-tRNA(Tyr), has no activity on correctly charged L-tyrosyl-tRNA(Tyr). Hydrolyzes correctly charged, achiral, glycyl-tRNA(Gly). Deacylates mischarged D.melanogaster and E.coli glycyl-tRNA(Ala). Probably acts via tRNA-based rather than protein-based catalysis. Acts on tRNAs only when the D-amino acid is either attached to the ribose 3'-OH or transferred to the 3'-OH from the 2'-OH through rapid transesterification. Binds a number of other D-amino acids (D-Arg, D-Glu, D-His, D-Lys, D-Ser), suggesting it may also deacylate other mischarged tRNAs. The protein is D-aminoacyl-tRNA deacylase of Plasmodium falciparum (isolate 3D7).